Reading from the N-terminus, the 238-residue chain is Large ribosomal subunit protein bL17m (238 aa).

The protein belongs to the bacterial ribosomal protein bL17 family. As to quaternary structure, component of the mitochondrial large ribosomal subunit (mt-LSU). Mature yeast 74S mitochondrial ribosomes consist of a small (37S) and a large (54S) subunit. The 37S small subunit contains a 15S ribosomal RNA (15S mt-rRNA) and 34 different proteins. The 54S large subunit contains a 21S rRNA (21S mt-rRNA) and 46 different proteins.

It is found in the mitochondrion. In terms of biological role, component of the mitochondrial ribosome (mitoribosome), a dedicated translation machinery responsible for the synthesis of mitochondrial genome-encoded proteins, including at least some of the essential transmembrane subunits of the mitochondrial respiratory chain. The mitoribosomes are attached to the mitochondrial inner membrane and translation products are cotranslationally integrated into the membrane. The polypeptide is Large ribosomal subunit protein bL17m (MRPL8) (Saccharomyces cerevisiae (strain ATCC 204508 / S288c) (Baker's yeast)).